A 231-amino-acid polypeptide reads, in one-letter code: MAKWVPALLLRRVPLFSLRFRPASSTFLPVLAATEPAVSVPSGDLSMPVKTRAEGEDDGFGEAGDPRRLLERPWRFRGCLPGKGNRDVGFEGTEGPTSTRPEWVWSCRCCLGCRASTRERVTSPVRAAGPQPRFTDRETEAAAGTLAHMGFAPPTSFSHFTDQELRDCSSLECLGVVEGDPHVLCSTLSLSRPSPSATLTLLLASSCLLAPAPPSFILLLFTLIAPDLPHS.

The first 25 residues, 1–25, serve as a signal peptide directing secretion; that stretch reads MAKWVPALLLRRVPLFSLRFRPASS. Residues 26 to 200 lie on the Extracellular side of the membrane; it reads TFLPVLAATE…SRPSPSATLT (175 aa). Residues 39 to 64 form a disordered region; that stretch reads SVPSGDLSMPVKTRAEGEDDGFGEAG. Residues 201 to 225 traverse the membrane as a helical segment; it reads LLLASSCLLAPAPPSFILLLFTLIA. The Cytoplasmic portion of the chain corresponds to 226 to 231; it reads PDLPHS.

It localises to the membrane. This is an uncharacterized protein from Homo sapiens (Human).